We begin with the raw amino-acid sequence, 177 residues long: Apoptosis regulatory protein Siva (177 aa).

Position 34 is a phosphotyrosine; by ABL2 (Tyr-34). The segment at 36–55 is interaction with BCL2L1 isoform Bcl-x(L) and inhibition of BCL2L1 anti-apoptotic activity; that stretch reads REVFERTKQLLFQGAQAYRD.

Binds through its N-terminal region to the C-terminus of CD27 and to PXMP2/PMP22. Binds to the C-terminus of TNFRSF18/GITR. Binds to BCL2L1/BCLX isoform Bcl-x(L) but not to BAX. Zn(2+) is required as a cofactor. As to expression, in post-ischemic kidney, found in cells lining the S3 segment of proximal tubules at 12 hours and 1 day post-ischemia. At five and seven days post-ischemia, found in epithelial cells of papillary proliferations in regenerating tubules.

It localises to the cytoplasm. The protein localises to the nucleus. Induces CD27-mediated apoptosis. Inhibits BCL2L1 isoform Bcl-x(L) anti-apoptotic activity. Inhibits activation of NF-kappa-B and promotes T-cell receptor-mediated apoptosis. This is Apoptosis regulatory protein Siva (Siva1) from Rattus norvegicus (Rat).